The sequence spans 357 residues: Cytochrome c peroxidase, mitochondrial (357 aa).

The N-terminal 23 residues, 1-23, are a transit peptide targeting the mitochondrion; it reads MSATALRIAPIASRTFQRRLGYL. H116 acts as the Proton acceptor in catalysis. Positions 189–212 are disordered; the sequence is PWRSGRTDLPEDMTPDNGRLPDGD. H239 lines the heme b pocket. The active-site Tryptophan radical intermediate is W255.

This sequence belongs to the peroxidase family. Cytochrome c peroxidase subfamily. In terms of assembly, forms a one-to-one complex with cytochrome c. Heme b serves as cofactor.

It is found in the mitochondrion matrix. The protein resides in the mitochondrion intermembrane space. It catalyses the reaction 2 Fe(II)-[cytochrome c] + H2O2 + 2 H(+) = 2 Fe(III)-[cytochrome c] + 2 H2O. Functionally, destroys radicals which are normally produced within the cells and which are toxic to biological systems. This Candida glabrata (strain ATCC 2001 / BCRC 20586 / JCM 3761 / NBRC 0622 / NRRL Y-65 / CBS 138) (Yeast) protein is Cytochrome c peroxidase, mitochondrial.